The primary structure comprises 343 residues: L-idonate 5-dehydrogenase (NAD(P)(+)) (343 aa).

The Zn(2+) site is built by cysteine 40, histidine 65, cysteine 93, cysteine 96, cysteine 99, cysteine 107, and glutamate 153.

Belongs to the zinc-containing alcohol dehydrogenase family. It depends on Zn(2+) as a cofactor.

The enzyme catalyses L-idonate + NADP(+) = 5-dehydro-D-gluconate + NADPH + H(+). It catalyses the reaction L-idonate + NAD(+) = 5-dehydro-D-gluconate + NADH + H(+). It participates in carbohydrate acid metabolism; L-idonate degradation. Functionally, catalyzes the NADH/NADPH-dependent oxidation of L-idonate to 5-ketogluconate (5KG). This is L-idonate 5-dehydrogenase (NAD(P)(+)) (idnD) from Escherichia coli (strain K12).